The sequence spans 468 residues: Hepatocyte nuclear factor 3-alpha (468 aa).

Positions 169 to 260 form a DNA-binding region, fork-head; it reads AKPPYSYISL…GNMFENGCYL (92 aa). An essential for DNA binding region spans residues 251-288; sequence GNMFENGCYLRRQKRFKCEKQPGAGGGSGGGGSKGGPE. The interval 269-396 is disordered; the sequence is EKQPGAGGGS…DPHYSFNHPF (128 aa). The span at 273–285 shows a compositional bias: gly residues; the sequence is GAGGGSGGGGSKG. Serine 303 and serine 327 each carry phosphoserine. Low complexity-rich tracts occupy residues 318–328 and 347–365; these read GAPAPGPAASP and SPAS…ALAS.

Binds DNA as a monomer. Interacts with FOXA2. Interacts with NKX2-1. Interacts with HDAC7. Interacts with the histone H3-H4 heterodimer. Associates with nucleosomes containing histone H2A. Interacts with AR. Interacts with NR0B2. As to expression, restricted mainly to endoderm-derived tissues (lung, liver, stomach, and small intestine). Expressed in the prostate.

The protein resides in the nucleus. Transcription factor that is involved in embryonic development, establishment of tissue-specific gene expression and regulation of gene expression in differentiated tissues. Is thought to act as a 'pioneer' factor opening the compacted chromatin for other proteins through interactions with nucleosomal core histones and thereby replacing linker histones at target enhancer and/or promoter sites. Binds DNA with the consensus sequence 5'-[AC]A[AT]T[AG]TT[GT][AG][CT]T[CT]-3'. Proposed to play a role in translating the epigenetic signatures into cell type-specific enhancer-driven transcriptional programs. Involved in the development of multiple endoderm-derived organ systems such as the liver, pancreas, lungs and prostate; FOXA1 and FOXA2 seem to have at least in part redundant roles. Plays a role in prostate morphogenesis and epithelial cell differentiation. FOXA1 and FOXA2 are essential for hepatic specification. FOXA1 and FOXA2 are required for morphogenesis and cell differentiation during formation of the lung. FOXA1 and FOXA2 are involved in bile duct formation; they positively regulate the binding of glucocorticoid receptor/NR3C1 to the IL6 promoter. FOXA1 and FOXA2 regulate multiple phases of midbrain dopaminergic neuron development; they regulate expression of NEUROG2 at the beginning of mDA neurogenesis and of NR4A2 and EN1 in immature mDA neurons. Modulates the transcriptional activity of nuclear hormone receptors. Is involved in ESR1-mediated transcription. Inhibits NKX2-1-mediated transcription from the SFTPC promoter in lung epithel independently from DNA-binding. Involved in regulation of apoptosis. Involved in cell cycle regulation. Originally described as a transcription activator for a number of liver genes such as AFP, albumin, tyrosine aminotransferase, PEPCK, etc. Interacts with the cis-acting regulatory regions of these genes. Involved in glucose homeostasis; activates the GCG promoter. The sequence is that of Hepatocyte nuclear factor 3-alpha (Foxa1) from Mus musculus (Mouse).